Consider the following 444-residue polypeptide: N-succinylarginine dihydrolase (444 aa).

Substrate is bound by residues 19 to 28 (SGLSVGNIAS), Asn110, and 137 to 138 (HR). Residue Glu174 is part of the active site. Substrate is bound at residue Arg214. His250 is an active-site residue. Substrate-binding residues include Asp252 and Asn362. The Nucleophile role is filled by Cys368.

Belongs to the succinylarginine dihydrolase family. In terms of assembly, homodimer.

The catalysed reaction is N(2)-succinyl-L-arginine + 2 H2O + 2 H(+) = N(2)-succinyl-L-ornithine + 2 NH4(+) + CO2. It participates in amino-acid degradation; L-arginine degradation via AST pathway; L-glutamate and succinate from L-arginine: step 2/5. Its function is as follows. Catalyzes the hydrolysis of N(2)-succinylarginine into N(2)-succinylornithine, ammonia and CO(2). The chain is N-succinylarginine dihydrolase from Aliivibrio fischeri (strain MJ11) (Vibrio fischeri).